A 343-amino-acid polypeptide reads, in one-letter code: tRNA N6-adenosine threonylcarbamoyltransferase (343 aa).

Fe cation contacts are provided by histidine 116 and histidine 120. Residues 138-142, aspartate 171, glycine 184, aspartate 188, and asparagine 277 each bind substrate; that span reads LVSGG. Aspartate 306 contacts Fe cation.

It belongs to the KAE1 / TsaD family. Requires Fe(2+) as cofactor.

The protein resides in the cytoplasm. The catalysed reaction is L-threonylcarbamoyladenylate + adenosine(37) in tRNA = N(6)-L-threonylcarbamoyladenosine(37) in tRNA + AMP + H(+). Required for the formation of a threonylcarbamoyl group on adenosine at position 37 (t(6)A37) in tRNAs that read codons beginning with adenine. Is involved in the transfer of the threonylcarbamoyl moiety of threonylcarbamoyl-AMP (TC-AMP) to the N6 group of A37, together with TsaE and TsaB. TsaD likely plays a direct catalytic role in this reaction. The chain is tRNA N6-adenosine threonylcarbamoyltransferase from Ligilactobacillus salivarius (strain UCC118) (Lactobacillus salivarius).